We begin with the raw amino-acid sequence, 495 residues long: Probable cytosol aminopeptidase (495 aa).

Residues Lys258 and Asp263 each coordinate Mn(2+). The active site involves Lys270. Mn(2+) contacts are provided by Asp281, Asp340, and Glu342. Arg344 is an active-site residue.

Belongs to the peptidase M17 family. It depends on Mn(2+) as a cofactor.

The protein localises to the cytoplasm. It catalyses the reaction Release of an N-terminal amino acid, Xaa-|-Yaa-, in which Xaa is preferably Leu, but may be other amino acids including Pro although not Arg or Lys, and Yaa may be Pro. Amino acid amides and methyl esters are also readily hydrolyzed, but rates on arylamides are exceedingly low.. The catalysed reaction is Release of an N-terminal amino acid, preferentially leucine, but not glutamic or aspartic acids.. Functionally, presumably involved in the processing and regular turnover of intracellular proteins. Catalyzes the removal of unsubstituted N-terminal amino acids from various peptides. The protein is Probable cytosol aminopeptidase of Leptospira interrogans serogroup Icterohaemorrhagiae serovar copenhageni (strain Fiocruz L1-130).